The chain runs to 98 residues: Integration host factor subunit beta (98 aa).

Belongs to the bacterial histone-like protein family. As to quaternary structure, heterodimer of an alpha and a beta chain.

Its function is as follows. This protein is one of the two subunits of integration host factor, a specific DNA-binding protein that functions in genetic recombination as well as in transcriptional and translational control. The sequence is that of Integration host factor subunit beta from Teredinibacter turnerae (strain ATCC 39867 / T7901).